Here is a 152-residue protein sequence, read N- to C-terminus: Probable ribose-5-phosphate isomerase B (152 aa).

D-ribulose 5-phosphate is bound at residue 10-11; sequence DH. Cys-69 functions as the Proton acceptor in the catalytic mechanism. 70–74 contacts D-ribulose 5-phosphate; that stretch reads GTGVG. Residue His-102 is the Proton donor of the active site. Positions 103, 113, 136, and 140 each coordinate D-ribulose 5-phosphate.

It belongs to the LacAB/RpiB family. As to quaternary structure, homodimer.

It carries out the reaction aldehydo-D-ribose 5-phosphate = D-ribulose 5-phosphate. The protein operates within carbohydrate degradation; pentose phosphate pathway; D-ribose 5-phosphate from D-ribulose 5-phosphate (non-oxidative stage): step 1/1. Catalyzes the interconversion of ribulose-5-P and ribose-5-P. The chain is Probable ribose-5-phosphate isomerase B from Mycoplasma genitalium (strain ATCC 33530 / DSM 19775 / NCTC 10195 / G37) (Mycoplasmoides genitalium).